Consider the following 148-residue polypeptide: Lysozyme C (148 aa).

Residues 1–18 (MKAVIILGLVLLSVTVQG) form the signal peptide. A C-type lysozyme domain is found at 19–148 (KIFERCELAR…VSQYVQGCGV (130 aa)). 4 disulfide bridges follow: Cys24-Cys146, Cys48-Cys134, Cys83-Cys99, and Cys95-Cys113. Residues Glu53 and Asp71 contribute to the active site.

Belongs to the glycosyl hydrolase 22 family. In terms of assembly, monomer.

The protein localises to the secreted. It catalyses the reaction Hydrolysis of (1-&gt;4)-beta-linkages between N-acetylmuramic acid and N-acetyl-D-glucosamine residues in a peptidoglycan and between N-acetyl-D-glucosamine residues in chitodextrins.. In terms of biological role, lysozymes have primarily a bacteriolytic function; those in tissues and body fluids are associated with the monocyte-macrophage system and enhance the activity of immunoagents. The chain is Lysozyme C (LYZ) from Papio anubis (Olive baboon).